Reading from the N-terminus, the 85-residue chain is UPF0291 protein SAK_0343 (85 aa).

Residues 58–85 (GNDVTPEKLRQVQREKGLHGRSLDDPNS) form a disordered region. Residues 62–85 (TPEKLRQVQREKGLHGRSLDDPNS) show a composition bias toward basic and acidic residues.

It belongs to the UPF0291 family.

It is found in the cytoplasm. The chain is UPF0291 protein SAK_0343 from Streptococcus agalactiae serotype Ia (strain ATCC 27591 / A909 / CDC SS700).